The following is a 185-amino-acid chain: Ribosome-recycling factor (185 aa).

Belongs to the RRF family.

It is found in the cytoplasm. Functionally, responsible for the release of ribosomes from messenger RNA at the termination of protein biosynthesis. May increase the efficiency of translation by recycling ribosomes from one round of translation to another. The polypeptide is Ribosome-recycling factor (Parafrankia sp. (strain EAN1pec)).